Here is a 410-residue protein sequence, read N- to C-terminus: MDIRGNVHRFVKFYIDGWKHFRDPTMESSYSAVYYWREQMKAMFLYTTSKERQMPYRSSWHTLVIIQATVCFLTMCYGVTESLGDKVQMGRDIAFIIGFFYIAFKIYYFQWYGDELDEVVEALETFHPWAQKGPGAVDYRTAKRWYFTLAFFLASSWLVFLCIFILLLITSPLWVHQQILPLHAAFPFQWHEKSIHPISHAFIYLFQTWNVMYFLTWLVCIEGLSVSIYVEITFAIEVLCLELRHLHQRCHGYEQLRLETNRLVQFHQKIVHILDHTNKVFHGTLIMQMGVNFFLVSLSVLEAMEARKDPKVVAQFAVLMLLALGHLSMWSYFGDLLSQKSLTISEAAYEAYDPIKGSKDVYRDLCLIIRRGQEPLIMRASPFPSFNFINYSAILNQCYGILTFLLKTLD.

At 1–59 the chain is on the cytoplasmic side; the sequence is MDIRGNVHRFVKFYIDGWKHFRDPTMESSYSAVYYWREQMKAMFLYTTSKERQMPYRSS. The helical transmembrane segment at 60-80 threads the bilayer; sequence WHTLVIIQATVCFLTMCYGVT. Residues 81-92 lie on the Extracellular side of the membrane; the sequence is ESLGDKVQMGRD. A helical transmembrane segment spans residues 93 to 113; sequence IAFIIGFFYIAFKIYYFQWYG. Topologically, residues 114–148 are cytoplasmic; that stretch reads DELDEVVEALETFHPWAQKGPGAVDYRTAKRWYFT. Residues 149 to 169 form a helical membrane-spanning segment; that stretch reads LAFFLASSWLVFLCIFILLLI. The Extracellular portion of the chain corresponds to 170-222; the sequence is TSPLWVHQQILPLHAAFPFQWHEKSIHPISHAFIYLFQTWNVMYFLTWLVCIE. The helical transmembrane segment at 223–243 threads the bilayer; it reads GLSVSIYVEITFAIEVLCLEL. Residues 244-279 lie on the Cytoplasmic side of the membrane; that stretch reads RHLHQRCHGYEQLRLETNRLVQFHQKIVHILDHTNK. A helical membrane pass occupies residues 280–300; that stretch reads VFHGTLIMQMGVNFFLVSLSV. The Extracellular segment spans residues 301–312; it reads LEAMEARKDPKV. Residues 313–333 form a helical membrane-spanning segment; the sequence is VAQFAVLMLLALGHLSMWSYF. Over 334-385 the chain is Cytoplasmic; it reads GDLLSQKSLTISEAAYEAYDPIKGSKDVYRDLCLIIRRGQEPLIMRASPFPS. A helical membrane pass occupies residues 386–406; sequence FNFINYSAILNQCYGILTFLL. Topologically, residues 407–410 are extracellular; that stretch reads KTLD.

Belongs to the insect chemoreceptor superfamily. Heteromeric odorant receptor channel (TC 1.A.69) family. Or49a subfamily. Interacts with Orco. Complexes exist early in the endomembrane system in olfactory sensory neurons (OSNs), coupling these complexes to the conserved ciliary trafficking pathway.

The protein localises to the cell membrane. In terms of biological role, odorant receptor which mediates acceptance or avoidance behavior, depending on its substrates. The odorant receptor repertoire encodes a large collection of odor stimuli that vary widely in identity, intensity, and duration. May form a complex with Orco to form odorant-sensing units, providing sensitive and prolonged odorant signaling and calcium permeability. The polypeptide is Putative odorant receptor 65c (Or65c) (Drosophila melanogaster (Fruit fly)).